A 352-amino-acid chain; its full sequence is Beta-hexosaminidase (352 aa).

Substrate contacts are provided by residues aspartate 74, arginine 82, arginine 149, and lysine 179–histidine 180. Catalysis depends on histidine 192, which acts as the Proton donor/acceptor. The active-site Nucleophile is aspartate 263.

Belongs to the glycosyl hydrolase 3 family. NagZ subfamily.

It localises to the cytoplasm. The enzyme catalyses Hydrolysis of terminal non-reducing N-acetyl-D-hexosamine residues in N-acetyl-beta-D-hexosaminides.. Its pathway is cell wall biogenesis; peptidoglycan recycling. In terms of biological role, plays a role in peptidoglycan recycling by cleaving the terminal beta-1,4-linked N-acetylglucosamine (GlcNAc) from peptide-linked peptidoglycan fragments, giving rise to free GlcNAc, anhydro-N-acetylmuramic acid and anhydro-N-acetylmuramic acid-linked peptides. The protein is Beta-hexosaminidase of Bordetella pertussis (strain Tohama I / ATCC BAA-589 / NCTC 13251).